The primary structure comprises 436 residues: MGKVAVIGAGLAGSEAAFKIATSGFKVDLYEMRPVKTTPAHRTEGFAELVCSNSLGGKDITTGSGLLKEEMRLLGSLIVSVAEEFSVPAGGALAVDRVKFSRRITEILENHPNIKVIRKEVTQLPEGYNFIIIATGPLTSEAFSKVIQRLTGSEYLYFYDAIAPTVDADTVDFSKGFWGDRYGKGKGDYFNCVLNEEEYEIFYNELINGKQVPLKDFEKAVFFEGCLPIEEMARRGKQTLLFGPMKPVGLIDPKTGKQPFAVIQLRKENREGTLLSLVGFQTKLKYPEQKRIFRLIPALKDATFVRLGSIHRNTFIQSHRVLKPTLQLKKDPRILFAGQITGVEGYAASAATGILAGINVVRMLKGKEPTVPPETTMLGGLVRYITEPKEELQPMNPNFSLLPDLDKKVRDKRRRKLLKAERALKDMEIFASQWKN.

Position 8–13 (8–13 (GAGLAG)) interacts with FAD.

It belongs to the MnmG family. TrmFO subfamily. FAD is required as a cofactor.

Its subcellular location is the cytoplasm. The catalysed reaction is uridine(54) in tRNA + (6R)-5,10-methylene-5,6,7,8-tetrahydrofolate + NADH + H(+) = 5-methyluridine(54) in tRNA + (6S)-5,6,7,8-tetrahydrofolate + NAD(+). The enzyme catalyses uridine(54) in tRNA + (6R)-5,10-methylene-5,6,7,8-tetrahydrofolate + NADPH + H(+) = 5-methyluridine(54) in tRNA + (6S)-5,6,7,8-tetrahydrofolate + NADP(+). Functionally, catalyzes the folate-dependent formation of 5-methyl-uridine at position 54 (M-5-U54) in all tRNAs. The polypeptide is Methylenetetrahydrofolate--tRNA-(uracil-5-)-methyltransferase TrmFO (Persephonella marina (strain DSM 14350 / EX-H1)).